Consider the following 805-residue polypeptide: U-box domain-containing protein 70 (805 aa).

TPR repeat units follow at residues 15-48 (ARRE…DPRD), 49-82 (ISFL…GREL), 90-127 (ARAL…HYSE), 129-153 (TLAK…DQEA), 154-187 (ADHH…NPKD), 189-221 (RVFS…DPTF), and 222-255 (LKGY…DPNN). Residues 136-160 (AEEARKEIEERERLDQEAADHHRDR) form a disordered region. Positions 341–417 (RKETEESLSR…VREVEELRQK (77 aa)) form a coiled coil. In terms of domain architecture, Protein kinase spans 445–711 (FSNSLKIGEG…GEVWAIVEAI (267 aa)). ATP-binding positions include 451 to 459 (IGEGGFGCV) and Lys472. Asp567 functions as the Proton acceptor in the catalytic mechanism. The U-box domain maps to 730 to 804 (SPPSYFICPI…QEWLQQHSMS (75 aa)).

This sequence belongs to the protein kinase superfamily. Ser/Thr protein kinase family. In terms of assembly, interacts with MODD.

The catalysed reaction is L-seryl-[protein] + ATP = O-phospho-L-seryl-[protein] + ADP + H(+). It carries out the reaction L-threonyl-[protein] + ATP = O-phospho-L-threonyl-[protein] + ADP + H(+). It catalyses the reaction S-ubiquitinyl-[E2 ubiquitin-conjugating enzyme]-L-cysteine + [acceptor protein]-L-lysine = [E2 ubiquitin-conjugating enzyme]-L-cysteine + N(6)-ubiquitinyl-[acceptor protein]-L-lysine.. The protein operates within protein modification; protein ubiquitination. Functionally, functions as an E3 ubiquitin ligase. Is recruited by MODD to promote ubiquitination of BZIP46, a positive regulator of abscisic acid (ABA) signaling and drought stress tolerance. This chain is U-box domain-containing protein 70, found in Oryza sativa subsp. japonica (Rice).